Consider the following 464-residue polypeptide: ATP synthase subunit beta (464 aa).

153–160 (GGAGVGKT) provides a ligand contact to ATP.

It belongs to the ATPase alpha/beta chains family. As to quaternary structure, F-type ATPases have 2 components, CF(1) - the catalytic core - and CF(0) - the membrane proton channel. CF(1) has five subunits: alpha(3), beta(3), gamma(1), delta(1), epsilon(1). CF(0) has three main subunits: a(1), b(2) and c(9-12). The alpha and beta chains form an alternating ring which encloses part of the gamma chain. CF(1) is attached to CF(0) by a central stalk formed by the gamma and epsilon chains, while a peripheral stalk is formed by the delta and b chains.

It is found in the cell membrane. It catalyses the reaction ATP + H2O + 4 H(+)(in) = ADP + phosphate + 5 H(+)(out). In terms of biological role, produces ATP from ADP in the presence of a proton gradient across the membrane. The catalytic sites are hosted primarily by the beta subunits. This chain is ATP synthase subunit beta, found in Alkaliphilus metalliredigens (strain QYMF).